The following is a 355-amino-acid chain: NADH-quinone oxidoreductase subunit H (355 aa).

The next 8 helical transmembrane spans lie at 25–45, 91–111, 126–146, 170–190, 205–225, 253–273, 290–310, and 330–350; these read VVRI…LILW, WLYL…WAVI, LLYA…AGWA, MGFA…SEIV, FLSW…ISGI, MAFA…SALA, FIPG…VFIW, and VFLP…MSPL.

It belongs to the complex I subunit 1 family. In terms of assembly, NDH-1 is composed of 14 different subunits. Subunits NuoA, H, J, K, L, M, N constitute the membrane sector of the complex.

It localises to the cell inner membrane. It catalyses the reaction a quinone + NADH + 5 H(+)(in) = a quinol + NAD(+) + 4 H(+)(out). NDH-1 shuttles electrons from NADH, via FMN and iron-sulfur (Fe-S) centers, to quinones in the respiratory chain. The immediate electron acceptor for the enzyme in this species is believed to be ubiquinone. Couples the redox reaction to proton translocation (for every two electrons transferred, four hydrogen ions are translocated across the cytoplasmic membrane), and thus conserves the redox energy in a proton gradient. This subunit may bind ubiquinone. This Burkholderia cenocepacia (strain ATCC BAA-245 / DSM 16553 / LMG 16656 / NCTC 13227 / J2315 / CF5610) (Burkholderia cepacia (strain J2315)) protein is NADH-quinone oxidoreductase subunit H.